We begin with the raw amino-acid sequence, 340 residues long: Methionine import ATP-binding protein MetN (340 aa).

In terms of domain architecture, ABC transporter spans Ile8–Phe246. Gly40–Ser47 serves as a coordination point for ATP.

Belongs to the ABC transporter superfamily. Methionine importer (TC 3.A.1.24) family. The complex is composed of two ATP-binding proteins (MetN), two transmembrane proteins (MetI) and a solute-binding protein (MetQ).

It is found in the cell inner membrane. It catalyses the reaction L-methionine(out) + ATP + H2O = L-methionine(in) + ADP + phosphate + H(+). The catalysed reaction is D-methionine(out) + ATP + H2O = D-methionine(in) + ADP + phosphate + H(+). Part of the ABC transporter complex MetNIQ involved in methionine import. Responsible for energy coupling to the transport system. The polypeptide is Methionine import ATP-binding protein MetN (Chlamydia felis (strain Fe/C-56) (Chlamydophila felis)).